Consider the following 230-residue polypeptide: Mitochondrial fission factor homolog B (230 aa).

Topologically, residues 1 to 210 are cytoplasmic; that stretch reads MSGAAFPSPT…ENKERAKREM (210 aa). The disordered stretch occupies residues 117-153; that stretch reads EQTSSVSHPSEEVRTQTKTRRERSVSENAGVHHNGPL. Ser-142 bears the Phosphoserine mark. Residues 179–210 are a coiled coil; that stretch reads VDATSLRRQIVKLNRRLQLLEEENKERAKREM. A helical; Anchor for type IV membrane protein membrane pass occupies residues 211–228; sequence VMYSITVAFWLVNSWVWF. At 229–230 the chain is on the extracellular side; the sequence is RR.

It belongs to the Tango11 family.

The protein resides in the mitochondrion outer membrane. The protein localises to the peroxisome. Plays a role in mitochondrial and peroxisomal fission. Promotes the recruitment and association of the fission mediator dynamin-related protein 1 (DNM1L) to the mitochondrial surface. This Danio rerio (Zebrafish) protein is Mitochondrial fission factor homolog B.